Consider the following 274-residue polypeptide: 4-deoxy-L-threo-5-hexosulose-uronate ketol-isomerase (274 aa).

Positions 192, 194, 199, and 241 each coordinate Zn(2+).

The protein belongs to the KduI family. Zn(2+) serves as cofactor.

The catalysed reaction is 5-dehydro-4-deoxy-D-glucuronate = 3-deoxy-D-glycero-2,5-hexodiulosonate. The protein operates within glycan metabolism; pectin degradation; 2-dehydro-3-deoxy-D-gluconate from pectin: step 4/5. Catalyzes the isomerization of 5-dehydro-4-deoxy-D-glucuronate to 3-deoxy-D-glycero-2,5-hexodiulosonate. The polypeptide is 4-deoxy-L-threo-5-hexosulose-uronate ketol-isomerase (Cereibacter sphaeroides (strain ATCC 17029 / ATH 2.4.9) (Rhodobacter sphaeroides)).